The sequence spans 502 residues: UPF0371 protein CLL_A2797 (502 aa).

The protein belongs to the UPF0371 family.

The chain is UPF0371 protein CLL_A2797 from Clostridium botulinum (strain Eklund 17B / Type B).